A 1070-amino-acid polypeptide reads, in one-letter code: MLVDGKGGITTIPGLNQIQLEGFCRFIDQGLMEELSKFQKIEDIDQEIEFQLFVETYQLVEPLIKERDAVYDSLTYSSELYVSAGLIRKASKDMQEQTIFIGSLPIMNSLGTFIVNGIYRIVINQILQSPGIYYRSELDQNGISVYTGTIISDWGGRLELEIDRKARVWARVSRKQKISILVLLSAMGLNLREILENVCYPEILLSFLRDKEKKKIGSKENAILEFYKKFACVGGDPLFSESLCKELQNKFFQQRCELGRIGRRNMNRRLHLDIPHNNTFLLPRDILEATDHLIGLKFGMGTLDDMNHLQNKRIRSVADLLQDQFGLALVRLENAVQGTLCGAIRHKRIPTPQNLVTSTLLTTTYESFFGLHPLSQVLDGTNPLTQIVHARKVSSLGPGGLTGRTASFRIRDIHPSHYGRICPIDTSEGINVGLIGSLAIHVRIGNWGSLESPFYEISDRLTGVRVLHLSPGRDEYYMVAAGNSLALNQDIQEDQVVPARYRQEFLTIAWEQVNLRSIFPFQYFSIGASLIPFIEHNDANRALMSSNMQRQAVPLTWSEKCIVGTGMERQAALDSGSLAIAEREGRVIYTDTEKILVSGDGKTINIPLVMYQRSNKNTCMYQQPQVRRGQFIKKGQILAGGAATVEGELALGKSVLVAYMPWEGYNFEDAVLISECLVYEDIFTSFHIKKYEIQIHMTTQGPEKVTNEIPHLEAHLIRNLDKNGIVLQGSWVEPGDVLVGKLTPQVVKESAYAPEDRLLRAILGIPVSASKETCLKVPIGARGRVIDVRWIQKKGGYGYNPEKIRVYILQKREIKVGDKVAGRHGNKGIISKILPRQDMPYLQDGRSVDLVFNPLGVPSRMNVGQIFECSLGLAGSLLDRHYRIAPFDERYEQEASRKIVFSELYEASKQTANPWAFEPEYPGKSRIFDGRTGKTFEHPVLIGKPYILKLIHQVDDKIHGRSIGHYALVTQQPLRGRAKQGGQRVGEMEVWALEGFGVAHILQEMLTYKSDHIRARQEVLGTTIVGGTIPSPKNAPESFRLLVRELRSLALELTHFLVSEKNFQVNRKEA.

Belongs to the RNA polymerase beta chain family. In terms of assembly, in plastids the minimal PEP RNA polymerase catalytic core is composed of four subunits: alpha, beta, beta', and beta''. When a (nuclear-encoded) sigma factor is associated with the core the holoenzyme is formed, which can initiate transcription.

It localises to the plastid. The catalysed reaction is RNA(n) + a ribonucleoside 5'-triphosphate = RNA(n+1) + diphosphate. Functionally, DNA-dependent RNA polymerase catalyzes the transcription of DNA into RNA using the four ribonucleoside triphosphates as substrates. The polypeptide is DNA-directed RNA polymerase subunit beta (rpoB) (Cuscuta reflexa (Southern Asian dodder)).